We begin with the raw amino-acid sequence, 173 residues long: Crossover junction endodeoxyribonuclease RuvC (173 aa).

Active-site residues include aspartate 8, glutamate 67, and aspartate 139. Aspartate 8, glutamate 67, and aspartate 139 together coordinate Mg(2+).

The protein belongs to the RuvC family. In terms of assembly, homodimer which binds Holliday junction (HJ) DNA. The HJ becomes 2-fold symmetrical on binding to RuvC with unstacked arms; it has a different conformation from HJ DNA in complex with RuvA. In the full resolvosome a probable DNA-RuvA(4)-RuvB(12)-RuvC(2) complex forms which resolves the HJ. The cofactor is Mg(2+).

Its subcellular location is the cytoplasm. The catalysed reaction is Endonucleolytic cleavage at a junction such as a reciprocal single-stranded crossover between two homologous DNA duplexes (Holliday junction).. In terms of biological role, the RuvA-RuvB-RuvC complex processes Holliday junction (HJ) DNA during genetic recombination and DNA repair. Endonuclease that resolves HJ intermediates. Cleaves cruciform DNA by making single-stranded nicks across the HJ at symmetrical positions within the homologous arms, yielding a 5'-phosphate and a 3'-hydroxyl group; requires a central core of homology in the junction. The consensus cleavage sequence is 5'-(A/T)TT(C/G)-3'. Cleavage occurs on the 3'-side of the TT dinucleotide at the point of strand exchange. HJ branch migration catalyzed by RuvA-RuvB allows RuvC to scan DNA until it finds its consensus sequence, where it cleaves and resolves the cruciform DNA. This is Crossover junction endodeoxyribonuclease RuvC from Shewanella amazonensis (strain ATCC BAA-1098 / SB2B).